The primary structure comprises 121 residues: Protein GAT4 (121 aa).

The disordered stretch occupies residues 29–48 (EAQHGLPRNADSQPARPRTG). The GATA-type zinc-finger motif lies at 53 to 79 (CGQCGEIKTSLQWREGPNGAACLCNAC).

This Saccharomyces cerevisiae (strain ATCC 204508 / S288c) (Baker's yeast) protein is Protein GAT4 (GAT4).